The primary structure comprises 943 residues: Glycine dehydrogenase (decarboxylating) (943 aa).

Lys-695 bears the N6-(pyridoxal phosphate)lysine mark.

This sequence belongs to the GcvP family. In terms of assembly, the glycine cleavage system is composed of four proteins: P, T, L and H. Pyridoxal 5'-phosphate serves as cofactor.

It carries out the reaction N(6)-[(R)-lipoyl]-L-lysyl-[glycine-cleavage complex H protein] + glycine + H(+) = N(6)-[(R)-S(8)-aminomethyldihydrolipoyl]-L-lysyl-[glycine-cleavage complex H protein] + CO2. In terms of biological role, the glycine cleavage system catalyzes the degradation of glycine. The P protein binds the alpha-amino group of glycine through its pyridoxal phosphate cofactor; CO(2) is released and the remaining methylamine moiety is then transferred to the lipoamide cofactor of the H protein. The protein is Glycine dehydrogenase (decarboxylating) of Jannaschia sp. (strain CCS1).